We begin with the raw amino-acid sequence, 616 residues long: Chaperone protein HscA (616 aa).

This sequence belongs to the heat shock protein 70 family.

In terms of biological role, chaperone involved in the maturation of iron-sulfur cluster-containing proteins. Has a low intrinsic ATPase activity which is markedly stimulated by HscB. Involved in the maturation of IscU. This chain is Chaperone protein HscA, found in Klebsiella pneumoniae (strain 342).